The chain runs to 378 residues: Fetuin-B (378 aa).

Residues 1-18 (MGVLRLLVLCTLAACCVA) form the signal peptide. 2 Cystatin fetuin-B-type domains span residues 28-141 (NAPF…YNCT) and 152-261 (SMCP…VSCE). Residue Asn-40 is glycosylated (N-linked (GlcNAc...) asparagine). Disulfide bonds link Cys-96/Cys-107, Cys-120/Cys-140, Cys-154/Cys-157, Cys-217/Cys-224, and Cys-237/Cys-260. N-linked (GlcNAc...) asparagine glycosylation is present at Asn-139. 2 disordered regions span residues 266 to 338 (QDQV…PQGD) and 357 to 378 (LPFP…QRTP). Residues 286 to 297 (QKNTAPTSSPSI) are compositionally biased toward polar residues. O-linked (GalNAc...) threonine glycans are attached at residues Thr-289 and Thr-292. Ser-316 is subject to Phosphoserine. A compositionally biased stretch (basic and acidic residues) spans 362–378 (KEQRSPECPGPEKQRTP).

Belongs to the fetuin family. As to expression, liver.

It localises to the secreted. In terms of biological role, protease inhibitor required for egg fertilization. Required to prevent premature zona pellucida hardening before fertilization, probably by inhibiting the protease activity of ASTL, a protease that mediates the cleavage of ZP2 and triggers zona pellucida hardening. The chain is Fetuin-B (Fetub) from Rattus norvegicus (Rat).